A 329-amino-acid polypeptide reads, in one-letter code: Succinylglutamate desuccinylase (329 aa).

Zn(2+) contacts are provided by His-53, Glu-56, and His-148. Glu-211 is an active-site residue.

The protein belongs to the AspA/AstE family. Succinylglutamate desuccinylase subfamily. It depends on Zn(2+) as a cofactor.

It catalyses the reaction N-succinyl-L-glutamate + H2O = L-glutamate + succinate. It functions in the pathway amino-acid degradation; L-arginine degradation via AST pathway; L-glutamate and succinate from L-arginine: step 5/5. In terms of biological role, transforms N(2)-succinylglutamate into succinate and glutamate. This chain is Succinylglutamate desuccinylase, found in Erwinia tasmaniensis (strain DSM 17950 / CFBP 7177 / CIP 109463 / NCPPB 4357 / Et1/99).